The following is a 513-amino-acid chain: ATP synthase subunit alpha (513 aa).

169-176 contributes to the ATP binding site; sequence GDRQCGKT.

It belongs to the ATPase alpha/beta chains family. F-type ATPases have 2 components, CF(1) - the catalytic core - and CF(0) - the membrane proton channel. CF(1) has five subunits: alpha(3), beta(3), gamma(1), delta(1), epsilon(1). CF(0) has three main subunits: a(1), b(2) and c(9-12). The alpha and beta chains form an alternating ring which encloses part of the gamma chain. CF(1) is attached to CF(0) by a central stalk formed by the gamma and epsilon chains, while a peripheral stalk is formed by the delta and b chains.

The protein resides in the cell inner membrane. It catalyses the reaction ATP + H2O + 4 H(+)(in) = ADP + phosphate + 5 H(+)(out). Functionally, produces ATP from ADP in the presence of a proton gradient across the membrane. The alpha chain is a regulatory subunit. This Burkholderia ambifaria (strain MC40-6) protein is ATP synthase subunit alpha.